A 230-amino-acid chain; its full sequence is Lactate utilization protein C (230 aa).

This sequence belongs to the LutC/YkgG family.

Its function is as follows. Is involved in L-lactate degradation and allows cells to grow with lactate as the sole carbon source. This chain is Lactate utilization protein C, found in Exiguobacterium sp. (strain ATCC BAA-1283 / AT1b).